The sequence spans 559 residues: Chaperonin GroEL 1 (559 aa).

Residues 29–32 (TIGP), 86–90 (DGTTT), Gly-413, 476–478 (NAL), and Asp-492 each bind ATP. Positions 521–541 (KPEPPAPAPAGDGDPMGGMGG) are disordered.

This sequence belongs to the chaperonin (HSP60) family. As to quaternary structure, forms a cylinder of 14 subunits composed of two heptameric rings stacked back-to-back. Interacts with the co-chaperonin GroES.

It is found in the cytoplasm. The catalysed reaction is ATP + H2O + a folded polypeptide = ADP + phosphate + an unfolded polypeptide.. Functionally, together with its co-chaperonin GroES, plays an essential role in assisting protein folding. The GroEL-GroES system forms a nano-cage that allows encapsulation of the non-native substrate proteins and provides a physical environment optimized to promote and accelerate protein folding. The chain is Chaperonin GroEL 1 from Synechococcus sp. (strain CC9605).